The following is an 882-amino-acid chain: Translation initiation factor IF-2 (882 aa).

Residues 28-294 form a disordered region; the sequence is GIRKSADDSV…SSLQQGFQKP (267 aa). The segment covering 67–81 has biased composition (polar residues); that stretch reads STLNIPGTGGKSKSV. Basic and acidic residues predominate over residues 92-209; it reads VKRDPQEAER…RMAEENKWTD (118 aa). A compositionally biased stretch (basic residues) spans 244 to 258; sequence GRGRNAKAARPKKGN. Over residues 259-272 the composition is skewed to basic and acidic residues; sequence KHAESKADREEARA. The tr-type G domain occupies 381-550; it reads PRAPVVTIMG…LLQAEVLELK (170 aa). Residues 390-397 form a G1 region; that stretch reads GHVDHGKT. 390 to 397 lines the GTP pocket; the sequence is GHVDHGKT. Residues 415–419 are G2; that stretch reads GITQH. Residues 436–439 are G3; that stretch reads DTPG. Residues 436–440 and 490–493 each bind GTP; these read DTPGH and NKID. The G4 stretch occupies residues 490–493; it reads NKID. Residues 526 to 528 are G5; sequence SAK. Lys-800 bears the N6-acetyllysine mark.

It belongs to the TRAFAC class translation factor GTPase superfamily. Classic translation factor GTPase family. IF-2 subfamily.

The protein resides in the cytoplasm. One of the essential components for the initiation of protein synthesis. Protects formylmethionyl-tRNA from spontaneous hydrolysis and promotes its binding to the 30S ribosomal subunits. Also involved in the hydrolysis of GTP during the formation of the 70S ribosomal complex. The chain is Translation initiation factor IF-2 from Shigella flexneri serotype 5b (strain 8401).